A 389-amino-acid chain; its full sequence is Nicotinate phosphoribosyltransferase (389 aa).

At His-211 the chain carries Phosphohistidine; by autocatalysis.

Belongs to the NAPRTase family. In terms of processing, transiently phosphorylated on a His residue during the reaction cycle. Phosphorylation strongly increases the affinity for substrates and increases the rate of nicotinate D-ribonucleotide production. Dephosphorylation regenerates the low-affinity form of the enzyme, leading to product release.

The enzyme catalyses nicotinate + 5-phospho-alpha-D-ribose 1-diphosphate + ATP + H2O = nicotinate beta-D-ribonucleotide + ADP + phosphate + diphosphate. It participates in cofactor biosynthesis; NAD(+) biosynthesis; nicotinate D-ribonucleotide from nicotinate: step 1/1. Catalyzes the synthesis of beta-nicotinate D-ribonucleotide from nicotinate and 5-phospho-D-ribose 1-phosphate at the expense of ATP. The sequence is that of Nicotinate phosphoribosyltransferase from Desulforapulum autotrophicum (strain ATCC 43914 / DSM 3382 / VKM B-1955 / HRM2) (Desulfobacterium autotrophicum).